The primary structure comprises 496 residues: NADH-quinone oxidoreductase subunit N (496 aa).

A run of 14 helical transmembrane segments spans residues 8–28 (LLST…VGLI), 37–57 (MFPL…YDFF), 73–93 (QFAG…VLST), 110–130 (LLLL…LLTM), 131–151 (YVGL…HPND), 162–182 (LVLG…IYGL), 203–223 (TILA…LVPF), 235–255 (PAPI…AALV), 271–291 (GLIL…LMAF), 300–320 (MAYS…AVSI), 341–361 (GVLF…AVIT), 386–406 (AAVL…AGFV), 421–441 (VWIA…YLSI), and 464–484 (FGMI…TPLA).

The protein belongs to the complex I subunit 2 family. NDH-1 is composed of 14 different subunits. Subunits NuoA, H, J, K, L, M, N constitute the membrane sector of the complex.

The protein localises to the cell membrane. The catalysed reaction is a quinone + NADH + 5 H(+)(in) = a quinol + NAD(+) + 4 H(+)(out). Its function is as follows. NDH-1 shuttles electrons from NADH, via FMN and iron-sulfur (Fe-S) centers, to quinones in the respiratory chain. The immediate electron acceptor for the enzyme in this species is believed to be a menaquinone. Couples the redox reaction to proton translocation (for every two electrons transferred, four hydrogen ions are translocated across the cytoplasmic membrane), and thus conserves the redox energy in a proton gradient. This Desulfitobacterium hafniense (strain DSM 10664 / DCB-2) protein is NADH-quinone oxidoreductase subunit N.